The sequence spans 480 residues: G-protein coupled receptor seb-2 (480 aa).

At 1 to 222 the chain is on the extracellular side; it reads MNPSISTAGA…CMSNGDVEAR (222 aa). Residue Asn-95 is glycosylated (N-linked (GlcNAc...) asparagine). A helical transmembrane segment spans residues 223–243; sequence ILAGLLTYSASVIFLIPAVFL. Topologically, residues 244 to 261 are cytoplasmic; that stretch reads LTLLRPIRCQPMFILHRH. A helical membrane pass occupies residues 262–282; the sequence is LLISCLLYGAFYLITVSLFVV. Residues 283–305 lie on the Extracellular side of the membrane; that stretch reads NDAPLSSQVFQNHLFCRLLFSIQ. Residues 306–328 form a helical membrane-spanning segment; the sequence is LRYLRLTNFTWMLAEAVYLWRLL. Topologically, residues 329-343 are cytoplasmic; that stretch reads HTAQHSEGETLRSYK. A helical membrane pass occupies residues 344–364; it reads VICWGVPGVITVVYIFVRSLN. Residues 365–386 are Extracellular-facing; the sequence is DDVGMCWIENSTVAWIEWMIIT. Residues 387 to 407 form a helical membrane-spanning segment; it reads PSLLAMGVNLLLLGLIVYILV. The Cytoplasmic segment spans residues 408–423; it reads KKLRCDPHLERIQYRK. The chain crosses the membrane as a helical span at residues 424-444; the sequence is AVRGALMLIPVFGVQQLLTIY. The Extracellular segment spans residues 445–480; the sequence is RFRNVCLIYRLLHKSFCRRMCSEILVITSGEAGSRS.

Belongs to the G-protein coupled receptor 2 family. As to expression, present in the head body-wall muscles from the L1 larval stage through to adulthood. Also expressed between L4 and the adult molt in vulval vm1 muscle cells. These cells play a role in opening the vulva during egg laying.

The protein localises to the cell membrane. In terms of biological role, not known. Putative receptor. The polypeptide is G-protein coupled receptor seb-2 (Caenorhabditis elegans).